The chain runs to 316 residues: 4-hydroxy-3-methylbut-2-enyl diphosphate reductase (316 aa).

A [4Fe-4S] cluster-binding site is contributed by Cys12. His41 and His74 together coordinate (2E)-4-hydroxy-3-methylbut-2-enyl diphosphate. Dimethylallyl diphosphate is bound by residues His41 and His74. Residues His41 and His74 each contribute to the isopentenyl diphosphate site. Cys96 lines the [4Fe-4S] cluster pocket. His124 contributes to the (2E)-4-hydroxy-3-methylbut-2-enyl diphosphate binding site. His124 serves as a coordination point for dimethylallyl diphosphate. His124 lines the isopentenyl diphosphate pocket. Glu126 (proton donor) is an active-site residue. Thr167 serves as a coordination point for (2E)-4-hydroxy-3-methylbut-2-enyl diphosphate. Cys197 contributes to the [4Fe-4S] cluster binding site. Residues Ser225, Ser226, Asn227, and Ser269 each coordinate (2E)-4-hydroxy-3-methylbut-2-enyl diphosphate. The dimethylallyl diphosphate site is built by Ser225, Ser226, Asn227, and Ser269. Isopentenyl diphosphate is bound by residues Ser225, Ser226, Asn227, and Ser269.

The protein belongs to the IspH family. In terms of assembly, homodimer. [4Fe-4S] cluster serves as cofactor.

The catalysed reaction is isopentenyl diphosphate + 2 oxidized [2Fe-2S]-[ferredoxin] + H2O = (2E)-4-hydroxy-3-methylbut-2-enyl diphosphate + 2 reduced [2Fe-2S]-[ferredoxin] + 2 H(+). It catalyses the reaction dimethylallyl diphosphate + 2 oxidized [2Fe-2S]-[ferredoxin] + H2O = (2E)-4-hydroxy-3-methylbut-2-enyl diphosphate + 2 reduced [2Fe-2S]-[ferredoxin] + 2 H(+). It participates in isoprenoid biosynthesis; dimethylallyl diphosphate biosynthesis; dimethylallyl diphosphate from (2E)-4-hydroxy-3-methylbutenyl diphosphate: step 1/1. The protein operates within isoprenoid biosynthesis; isopentenyl diphosphate biosynthesis via DXP pathway; isopentenyl diphosphate from 1-deoxy-D-xylulose 5-phosphate: step 6/6. In terms of biological role, catalyzes the conversion of 1-hydroxy-2-methyl-2-(E)-butenyl 4-diphosphate (HMBPP) into a mixture of isopentenyl diphosphate (IPP) and dimethylallyl diphosphate (DMAPP). Acts in the terminal step of the DOXP/MEP pathway for isoprenoid precursor biosynthesis. In Escherichia coli (strain ATCC 8739 / DSM 1576 / NBRC 3972 / NCIMB 8545 / WDCM 00012 / Crooks), this protein is 4-hydroxy-3-methylbut-2-enyl diphosphate reductase.